The primary structure comprises 1193 residues: DNA-directed RNA polymerase subunit beta (1193 aa).

A compositionally biased stretch (acidic residues) spans 1152 to 1161 (IEMRDLEDDE). The tract at residues 1152–1193 (IEMRDLEDDEETKKADGLALSNDEDAADLAPVDLERDAVTKE) is disordered. A compositionally biased stretch (basic and acidic residues) spans 1184-1193 (DLERDAVTKE).

This sequence belongs to the RNA polymerase beta chain family. The RNAP catalytic core consists of 2 alpha, 1 beta, 1 beta' and 1 omega subunit. When a sigma factor is associated with the core the holoenzyme is formed, which can initiate transcription.

The catalysed reaction is RNA(n) + a ribonucleoside 5'-triphosphate = RNA(n+1) + diphosphate. Its function is as follows. DNA-dependent RNA polymerase catalyzes the transcription of DNA into RNA using the four ribonucleoside triphosphates as substrates. The chain is DNA-directed RNA polymerase subunit beta from Bacillus pumilus (strain SAFR-032).